We begin with the raw amino-acid sequence, 423 residues long: Histidine--tRNA ligase (423 aa).

The protein belongs to the class-II aminoacyl-tRNA synthetase family. As to quaternary structure, homodimer.

It is found in the cytoplasm. It carries out the reaction tRNA(His) + L-histidine + ATP = L-histidyl-tRNA(His) + AMP + diphosphate + H(+). The protein is Histidine--tRNA ligase (hisS) of Pasteurella multocida (strain Pm70).